The following is a 227-amino-acid chain: Cytochrome c oxidase subunit 2 (227 aa).

The Mitochondrial intermembrane segment spans residues 1–14 (MAYPLQLGFQDAVS). The chain crosses the membrane as a helical span at residues 15–45 (PIMEELLYFHDHTLMIVFLISSLVLYIITLM). Residues 46–59 (LTTKLTHTNTMNAQ) are Mitochondrial matrix-facing. The chain crosses the membrane as a helical span at residues 60-87 (EVETVWTILPAIILILIALPSLRILYMM). Over 88-227 (DEINNPSLTV…TFEKWTASLL (140 aa)) the chain is Mitochondrial intermembrane. Cu cation-binding residues include H161, C196, E198, C200, H204, and M207. Residue E198 coordinates Mg(2+).

It belongs to the cytochrome c oxidase subunit 2 family. In terms of assembly, component of the cytochrome c oxidase (complex IV, CIV), a multisubunit enzyme composed of 14 subunits. The complex is composed of a catalytic core of 3 subunits MT-CO1, MT-CO2 and MT-CO3, encoded in the mitochondrial DNA, and 11 supernumerary subunits COX4I, COX5A, COX5B, COX6A, COX6B, COX6C, COX7A, COX7B, COX7C, COX8 and NDUFA4, which are encoded in the nuclear genome. The complex exists as a monomer or a dimer and forms supercomplexes (SCs) in the inner mitochondrial membrane with NADH-ubiquinone oxidoreductase (complex I, CI) and ubiquinol-cytochrome c oxidoreductase (cytochrome b-c1 complex, complex III, CIII), resulting in different assemblies (supercomplex SCI(1)III(2)IV(1) and megacomplex MCI(2)III(2)IV(2)). Found in a complex with TMEM177, COA6, COX18, COX20, SCO1 and SCO2. Interacts with TMEM177 in a COX20-dependent manner. Interacts with COX20. Interacts with COX16. The cofactor is Cu cation.

Its subcellular location is the mitochondrion inner membrane. It carries out the reaction 4 Fe(II)-[cytochrome c] + O2 + 8 H(+)(in) = 4 Fe(III)-[cytochrome c] + 2 H2O + 4 H(+)(out). Its function is as follows. Component of the cytochrome c oxidase, the last enzyme in the mitochondrial electron transport chain which drives oxidative phosphorylation. The respiratory chain contains 3 multisubunit complexes succinate dehydrogenase (complex II, CII), ubiquinol-cytochrome c oxidoreductase (cytochrome b-c1 complex, complex III, CIII) and cytochrome c oxidase (complex IV, CIV), that cooperate to transfer electrons derived from NADH and succinate to molecular oxygen, creating an electrochemical gradient over the inner membrane that drives transmembrane transport and the ATP synthase. Cytochrome c oxidase is the component of the respiratory chain that catalyzes the reduction of oxygen to water. Electrons originating from reduced cytochrome c in the intermembrane space (IMS) are transferred via the dinuclear copper A center (CU(A)) of subunit 2 and heme A of subunit 1 to the active site in subunit 1, a binuclear center (BNC) formed by heme A3 and copper B (CU(B)). The BNC reduces molecular oxygen to 2 water molecules using 4 electrons from cytochrome c in the IMS and 4 protons from the mitochondrial matrix. This is Cytochrome c oxidase subunit 2 (MT-CO2) from Hippopotamus amphibius (Hippopotamus).